Here is a 320-residue protein sequence, read N- to C-terminus: Beta-sarcoglycan (320 aa).

Residues 1–10 (MAAAAAAAAA) are compositionally biased toward low complexity. Residues 1 to 34 (MAAAAAAAAATEQQSSNGPVKKSMREKAVERRNV) form a disordered region. Residues 1-67 (MAAAAAAAAA…GLRGRKGNLA (67 aa)) are Cytoplasmic-facing. The span at 23–34 (SMREKAVERRNV) shows a compositional bias: basic and acidic residues. Residues 68 to 88 (ICVIVLLFILAVINLLITLVI) form a helical; Signal-anchor for type II membrane protein membrane-spanning segment. Topologically, residues 89–320 (WAVIRIGPNG…VADNPCGNTH (232 aa)) are extracellular. Residues N160, N213, and N260 are each glycosylated (N-linked (GlcNAc...) asparagine). 2 cysteine pairs are disulfide-bonded: C290–C316 and C292–C309.

The protein belongs to the sarcoglycan beta/delta/gamma/zeta family. As to quaternary structure, cross-link to form 2 major subcomplexes: one consisting of SGCB, SGCD and SGCG and the other consisting of SGCB and SGCD. The association between SGCB and SGCG is particularly strong while SGCA is loosely associated with the other sarcoglycans. Disulfide bonds are present.

It localises to the cell membrane. It is found in the sarcolemma. The protein localises to the cytoplasm. Its subcellular location is the cytoskeleton. Functionally, component of the sarcoglycan complex, a subcomplex of the dystrophin-glycoprotein complex which forms a link between the F-actin cytoskeleton and the extracellular matrix. The sequence is that of Beta-sarcoglycan (SGCB) from Mesocricetus auratus (Golden hamster).